A 132-amino-acid chain; its full sequence is Glycine cleavage system H protein (132 aa).

The 83-residue stretch at 27–109 (FATIGISAFA…FDFGWILKVK (83 aa)) folds into the Lipoyl-binding domain. Lysine 68 bears the N6-lipoyllysine mark.

This sequence belongs to the GcvH family. The glycine cleavage system is composed of four proteins: P, T, L and H. The cofactor is (R)-lipoate.

Its function is as follows. The glycine cleavage system catalyzes the degradation of glycine. The H protein shuttles the methylamine group of glycine from the P protein to the T protein. This is Glycine cleavage system H protein from Rhodopirellula baltica (strain DSM 10527 / NCIMB 13988 / SH1).